The primary structure comprises 412 residues: D-nopaline dehydrogenase (412 aa).

This sequence belongs to the lysopine/nopaline/octopine/opine/vitopine dehydrogenases family. Homotetramer.

It carries out the reaction D-nopaline + NADP(+) + H2O = L-arginine + 2-oxoglutarate + NADPH + H(+). The polypeptide is D-nopaline dehydrogenase (nos) (Agrobacterium vitis (Rhizobium vitis)).